The following is a 145-amino-acid chain: Enhancer of mRNA-decapping protein 2 (145 aa).

Disordered stretches follow at residues 1–74 (MGSE…DKAT) and 89–115 (PKKKSCKYKKKKTRQYQDRAAASIDSK). The segment covering 29–42 (TKTQILVPPTQSLP) has biased composition (polar residues). Over residues 55 to 73 (QRREPRERTSKTGHEDDKA) the composition is skewed to basic and acidic residues. Basic residues predominate over residues 89–102 (PKKKSCKYKKKKTR).

The protein belongs to the EDC family.

It localises to the cytoplasm. The protein resides in the nucleus. MRNA-binding protein which stimulates mRNA decapping by DCP1 and DCP2. The polypeptide is Enhancer of mRNA-decapping protein 2 (EDC2) (Saccharomyces cerevisiae (strain ATCC 204508 / S288c) (Baker's yeast)).